A 520-amino-acid polypeptide reads, in one-letter code: Bifunctional purine biosynthesis protein PurH (520 aa).

The MGS-like domain occupies 1–150 (MSDDRKAIKR…KNHPSVAVVV (150 aa)).

This sequence belongs to the PurH family.

It catalyses the reaction (6R)-10-formyltetrahydrofolate + 5-amino-1-(5-phospho-beta-D-ribosyl)imidazole-4-carboxamide = 5-formamido-1-(5-phospho-D-ribosyl)imidazole-4-carboxamide + (6S)-5,6,7,8-tetrahydrofolate. It carries out the reaction IMP + H2O = 5-formamido-1-(5-phospho-D-ribosyl)imidazole-4-carboxamide. It functions in the pathway purine metabolism; IMP biosynthesis via de novo pathway; 5-formamido-1-(5-phospho-D-ribosyl)imidazole-4-carboxamide from 5-amino-1-(5-phospho-D-ribosyl)imidazole-4-carboxamide (10-formyl THF route): step 1/1. The protein operates within purine metabolism; IMP biosynthesis via de novo pathway; IMP from 5-formamido-1-(5-phospho-D-ribosyl)imidazole-4-carboxamide: step 1/1. The sequence is that of Bifunctional purine biosynthesis protein PurH from Corynebacterium glutamicum (strain R).